The chain runs to 621 residues: Chaperone protein HtpG (621 aa).

Residues M1–R328 form an a; substrate-binding region. The interval E329 to R544 is b. Residues F545 to L621 are c.

It belongs to the heat shock protein 90 family. In terms of assembly, homodimer.

The protein localises to the cytoplasm. Functionally, molecular chaperone. Has ATPase activity. In Rickettsia prowazekii (strain Madrid E), this protein is Chaperone protein HtpG.